The sequence spans 269 residues: Tryptophan synthase alpha chain (269 aa).

Catalysis depends on proton acceptor residues Glu-56 and Asp-67.

This sequence belongs to the TrpA family. In terms of assembly, tetramer of two alpha and two beta chains.

It catalyses the reaction (1S,2R)-1-C-(indol-3-yl)glycerol 3-phosphate + L-serine = D-glyceraldehyde 3-phosphate + L-tryptophan + H2O. It functions in the pathway amino-acid biosynthesis; L-tryptophan biosynthesis; L-tryptophan from chorismate: step 5/5. Functionally, the alpha subunit is responsible for the aldol cleavage of indoleglycerol phosphate to indole and glyceraldehyde 3-phosphate. The chain is Tryptophan synthase alpha chain from Mycobacterium ulcerans (strain Agy99).